A 124-amino-acid chain; its full sequence is Large ribosomal subunit protein bL12 (124 aa).

This sequence belongs to the bacterial ribosomal protein bL12 family. As to quaternary structure, homodimer. Part of the ribosomal stalk of the 50S ribosomal subunit. Forms a multimeric L10(L12)X complex, where L10 forms an elongated spine to which 2 to 4 L12 dimers bind in a sequential fashion. Binds GTP-bound translation factors.

In terms of biological role, forms part of the ribosomal stalk which helps the ribosome interact with GTP-bound translation factors. Is thus essential for accurate translation. The polypeptide is Large ribosomal subunit protein bL12 (Cupriavidus pinatubonensis (strain JMP 134 / LMG 1197) (Cupriavidus necator (strain JMP 134))).